Here is a 570-residue protein sequence, read N- to C-terminus: MSEKHPGPLVVEGKLSDAERMKRESNYLRGTIAEDLNDGLTGGFKGDNFLLIRFHGMYQQDDRDIRAERAEQKLEPRHAMLLRCRLPGGVITTKQWQVIDKFAADNTIYGSIRLTNRQTFQFHGILKKNVKPVHQMLHSVGLDALATANDMNRNVLCTSNPYESQLHSEAYEWAKKISEHLLPRTRAYAEIWLDQEKVATTDEEPILGQTYLPRKFKTTVVIPPQNDIDLHANDMSFVAIAENGKLVGFNLLVGGGLSIEHGNKKTYARTASEFGFLPLEHTLAVAEAVVTTQRDWGNRTDRKNAKTKYTLERVGLETFKAEVERRAGITFEPIRPYEFTGRGDRIGWVKGIDDNWHLTLFIENGRILDYPGRPLKSGLLEIAKIHQGEFRITANQNLIVASVPESQKMKVEKLALDYGLMNAVSPQRENSMACVSFPTCPLAMAEAERFLPSFVDKVEAVMAKHGVGNEHIVLRVTGCPNGCGRAMLAEIGLVGKAPGRYNLHLGGNRIGSRIPRMYKENITEPAILASLDELIGRWAKEREAGEGFGDFTVRAGIIRPVLDPARDFWE.

Residues cysteine 434, cysteine 440, cysteine 479, and cysteine 483 each coordinate [4Fe-4S] cluster. Cysteine 483 lines the siroheme pocket.

The protein belongs to the nitrite and sulfite reductase 4Fe-4S domain family. As to quaternary structure, alpha(8)-beta(8). The alpha component is a flavoprotein, the beta component is a hemoprotein. Siroheme is required as a cofactor. It depends on [4Fe-4S] cluster as a cofactor.

It catalyses the reaction hydrogen sulfide + 3 NADP(+) + 3 H2O = sulfite + 3 NADPH + 4 H(+). Its pathway is sulfur metabolism; hydrogen sulfide biosynthesis; hydrogen sulfide from sulfite (NADPH route): step 1/1. Component of the sulfite reductase complex that catalyzes the 6-electron reduction of sulfite to sulfide. This is one of several activities required for the biosynthesis of L-cysteine from sulfate. This is Sulfite reductase [NADPH] hemoprotein beta-component from Salmonella arizonae (strain ATCC BAA-731 / CDC346-86 / RSK2980).